A 351-amino-acid chain; its full sequence is Probable sugar phosphate/phosphate translocator At5g11230 (351 aa).

10 helical membrane passes run 15 to 35, 49 to 69, 89 to 109, 113 to 133, 141 to 161, 165 to 185, 205 to 225, 236 to 256, 263 to 283, and 286 to 306; these read IVLSYSYVAIWIFLSFTVIVY, FPISLTMIHMSFCSTLAFLII, VVPIGALYALSLWLSNSAYIY, SFIQMLKALMPVAVYSIGVLF, DTMMNMLSISFGVAIAAYGEA, VWGVILQLGAVAFEATRLVLI, VAPCCLAFLFIPWIYVEFPVL, AIFGANSFCAFALNLAVFLLV, TMNVAGVVKDWLLIAFSWSVI, and TVTPINLFGYGIAFLGVAYYN. One can recognise an EamA domain in the interval 38–156; it reads YILDKKMYNW…LSISFGVAIA (119 aa). The tract at residues 321-351 is disordered; that stretch reads KKIQQADEESGRLLEEREGDVEGKKNDQSGN.

This sequence belongs to the TPT transporter family. TPT (TC 2.A.7.9) subfamily.

Its subcellular location is the membrane. This Arabidopsis thaliana (Mouse-ear cress) protein is Probable sugar phosphate/phosphate translocator At5g11230.